We begin with the raw amino-acid sequence, 137 residues long: Large ribosomal subunit protein uL16 (137 aa).

This sequence belongs to the universal ribosomal protein uL16 family. Part of the 50S ribosomal subunit.

Binds 23S rRNA and is also seen to make contacts with the A and possibly P site tRNAs. This Streptococcus equi subsp. zooepidemicus (strain H70) protein is Large ribosomal subunit protein uL16.